Here is a 308-residue protein sequence, read N- to C-terminus: Very-long-chain enoyl-CoA reductase (308 aa).

The Cytoplasmic portion of the chain corresponds to 1–86 (MKHYEVEILD…YFRDLGAQIS (86 aa)). N6-acetyllysine is present on Lys22. Residue Ser58 is modified to Phosphoserine. Lys60 carries the N6-acetyllysine modification. A helical membrane pass occupies residues 87-106 (WVTVFLTEYAGPLFIYLLFY). Residues 107–124 (FRVPFIYGHKYDFTSSRH) lie on the Lumenal side of the membrane. A helical membrane pass occupies residues 125-147 (TVVHLACICHSFHYIKRLLETLF). At 148–158 (VHRFSHGTMPL) the chain is on the cytoplasmic side. Residues 159-180 (RNIFKNCTYYWGFAAWMAYYIN) traverse the membrane as a helical segment. At 181-189 (HPLYTPPTY) the chain is on the lumenal side. The chain crosses the membrane as a helical span at residues 190–216 (GAQQVKLALAIFVICQLGNFSIHMALR). Residues 217 to 245 (DLRPAGSKTRKIPYPTKNPFTWLFLLVSC) lie on the Cytoplasmic side of the membrane. Residues 246-262 (PNYTYEVGSWIGFAIMT) form a helical membrane-spanning segment. Residues 263–264 (QC) lie on the Lumenal side of the membrane. A helical transmembrane segment spans residues 265-292 (LPVALFSLVGFTQMTIWAKGKHRSYLKE). The Cytoplasmic portion of the chain corresponds to 293–308 (FRDYPPLRMPIIPFLL).

Belongs to the steroid 5-alpha reductase family. In terms of assembly, interacts with ELOVL1 and LASS2. Interacts with HACD1 and HACD2 (via the third lumenal loop), but not with HACD3 and HACD4. Interacts with ELOVL1, ELOVL2, ELOVL3, ELOVL5 and ELOVL7 in the presence of acyl-CoA; interaction with HACD1/2 and that with ELOVLs are mutually exclusive. Glycosylated. Expressed in most tissues tested. Highly expressed in skeletal muscle.

The protein resides in the endoplasmic reticulum membrane. It catalyses the reaction a very-long-chain 2,3-saturated fatty acyl-CoA + NADP(+) = a very-long-chain (2E)-enoyl-CoA + NADPH + H(+). The enzyme catalyses octadecanoyl-CoA + NADP(+) = (2E)-octadecenoyl-CoA + NADPH + H(+). It carries out the reaction (2E,7Z,10Z,13Z,16Z)-docosapentaenoyl-CoA + NADPH + H(+) = (7Z,10Z,13Z,16Z)-docosatetraenoyl-CoA + NADP(+). The catalysed reaction is (2E,7Z,10Z,13Z,16Z,19Z)-docosahexaenoyl-CoA + NADPH + H(+) = (7Z,10Z,13Z,16Z,19Z)-docosapentaenoyl-CoA + NADP(+). It catalyses the reaction (2E,8Z,11Z,14Z)-eicosatetraenoyl-CoA + NADPH + H(+) = (8Z,11Z,14Z)-eicosatrienoyl-CoA + NADP(+). The enzyme catalyses (2E)-hexadecenoyl-CoA + NADPH + H(+) = hexadecanoyl-CoA + NADP(+). It participates in lipid metabolism; fatty acid biosynthesis. The protein operates within lipid metabolism; sphingolipid metabolism. Involved in both the production of very long-chain fatty acids for sphingolipid synthesis and the degradation of the sphingosine moiety in sphingolipids through the sphingosine 1-phosphate metabolic pathway. Catalyzes the last of the four reactions of the long-chain fatty acids elongation cycle. This endoplasmic reticulum-bound enzymatic process, allows the addition of 2 carbons to the chain of long- and very long-chain fatty acids/VLCFAs per cycle. This enzyme reduces the trans-2,3-enoyl-CoA fatty acid intermediate to an acyl-CoA that can be further elongated by entering a new cycle of elongation. Thereby, it participates in the production of VLCFAs of different chain lengths that are involved in multiple biological processes as precursors of membrane lipids and lipid mediators. Catalyzes the saturation step of the sphingosine 1-phosphate metabolic pathway, the conversion of trans-2-hexadecenoyl-CoA to palmitoyl-CoA. The protein is Very-long-chain enoyl-CoA reductase (TECR) of Homo sapiens (Human).